Here is a 1171-residue protein sequence, read N- to C-terminus: ATP-dependent helicase/deoxyribonuclease subunit B (1171 aa).

Residues 1-301 form the UvrD-like helicase ATP-binding domain; sequence MSLRFVIGRA…AHLEMHYEAR (301 aa). Residue 8–15 coordinates ATP; that stretch reads GRAGSGKS. The UvrD-like helicase C-terminal domain maps to 281-587; that stretch reads MKQPRFHSQA…QFANIPPSLD (307 aa). [4Fe-4S] cluster contacts are provided by Cys-805, Cys-1129, Cys-1132, and Cys-1138.

This sequence belongs to the helicase family. AddB/RexB type 1 subfamily. Heterodimer of AddA and AddB. Requires Mg(2+) as cofactor. [4Fe-4S] cluster is required as a cofactor.

Functionally, the heterodimer acts as both an ATP-dependent DNA helicase and an ATP-dependent, dual-direction single-stranded exonuclease. Recognizes the chi site generating a DNA molecule suitable for the initiation of homologous recombination. The AddB subunit has 5' -&gt; 3' nuclease activity but not helicase activity. In Bacillus mycoides (strain KBAB4) (Bacillus weihenstephanensis), this protein is ATP-dependent helicase/deoxyribonuclease subunit B.